A 248-amino-acid chain; its full sequence is Small ribosomal subunit protein uS2 (248 aa).

The protein belongs to the universal ribosomal protein uS2 family.

The protein is Small ribosomal subunit protein uS2 of Cupriavidus necator (strain ATCC 17699 / DSM 428 / KCTC 22496 / NCIMB 10442 / H16 / Stanier 337) (Ralstonia eutropha).